The chain runs to 300 residues: Cation-efflux pump FieF (300 aa).

A run of 4 helical transmembrane segments spans residues 11–31 (LAAVSATAVALVLFVMKVFAW), 40–60 (LASLVDSLVDIAASLVNLLVV), 81–101 (LAALAQSMFISGSALFLILTG), and 114–134 (PEVGMWVTLIALVATLLLVSF). The Zn(2+) site is built by aspartate 45 and aspartate 49. The Zn(2+) site is built by histidine 153 and aspartate 157. A run of 2 helical transmembrane segments spans residues 156–176 (SDLLMNGAILVALALSWKGIT) and 182–202 (FALGIGVYILYSALRMGYDAV).

It belongs to the cation diffusion facilitator (CDF) transporter (TC 2.A.4) family. FieF subfamily. In terms of assembly, homodimer.

It localises to the cell inner membrane. It catalyses the reaction Zn(2+)(in) + H(+)(out) = Zn(2+)(out) + H(+)(in). The catalysed reaction is Cd(2+)(in) + H(+)(out) = Cd(2+)(out) + H(+)(in). The enzyme catalyses Fe(2+)(in) + H(+)(out) = Fe(2+)(out) + H(+)(in). Functionally, divalent metal cation transporter which exports Zn(2+), Cd(2+) and possibly Fe(2+). May be involved in zinc and iron detoxification by efflux. This is Cation-efflux pump FieF from Pectobacterium atrosepticum (strain SCRI 1043 / ATCC BAA-672) (Erwinia carotovora subsp. atroseptica).